The following is a 209-amino-acid chain: ATP-dependent Clp protease proteolytic subunit (209 aa).

The Nucleophile role is filled by serine 106. Histidine 131 is an active-site residue.

This sequence belongs to the peptidase S14 family. In terms of assembly, fourteen ClpP subunits assemble into 2 heptameric rings which stack back to back to give a disk-like structure with a central cavity, resembling the structure of eukaryotic proteasomes.

The protein resides in the cytoplasm. It carries out the reaction Hydrolysis of proteins to small peptides in the presence of ATP and magnesium. alpha-casein is the usual test substrate. In the absence of ATP, only oligopeptides shorter than five residues are hydrolyzed (such as succinyl-Leu-Tyr-|-NHMec, and Leu-Tyr-Leu-|-Tyr-Trp, in which cleavage of the -Tyr-|-Leu- and -Tyr-|-Trp bonds also occurs).. Cleaves peptides in various proteins in a process that requires ATP hydrolysis. Has a chymotrypsin-like activity. Plays a major role in the degradation of misfolded proteins. This chain is ATP-dependent Clp protease proteolytic subunit, found in Brucella canis (strain ATCC 23365 / NCTC 10854 / RM-666).